Reading from the N-terminus, the 447-residue chain is Aladin (447 aa).

The segment at 49-69 is disordered; it reads STPSSLQENEGQENGDKASGE. WD repeat units lie at residues 97-138, 142-181, 210-250, and 252-291; these read LSEI…EPCI, DSQR…NMAL, QNDE…GTPI, and RGLG…SEPW.

Part of the nuclear pore complex (NPC). The NPC has an eight-fold symmetrical structure comprising a central transport channel and two rings, the cytoplasmic and nuclear rings, to which eight filaments are attached. The cytoplasmic filaments have loose ends, while the nuclear filaments are joined in a distal ring, forming a nuclear basket. NPCs are highly dynamic in configuration and composition, and can be devided in 3 subcomplexes, the NUP62 subcomplex, the NUP107-160 subcomplex and the NUP93 subcomplex, containing approximately 30 different nucleoporin proteins.

The protein localises to the nucleus envelope. It is found in the nucleus. The protein resides in the nuclear pore complex. This chain is Aladin, found in Arabidopsis thaliana (Mouse-ear cress).